The primary structure comprises 263 residues: Acetylglutamate kinase (263 aa).

Residues 48–49, Arg-70, and Asn-162 each bind substrate; that span reads GG.

The protein belongs to the acetylglutamate kinase family. ArgB subfamily.

Its subcellular location is the cytoplasm. The enzyme catalyses N-acetyl-L-glutamate + ATP = N-acetyl-L-glutamyl 5-phosphate + ADP. Its pathway is amino-acid biosynthesis; L-arginine biosynthesis; N(2)-acetyl-L-ornithine from L-glutamate: step 2/4. In terms of biological role, catalyzes the ATP-dependent phosphorylation of N-acetyl-L-glutamate. In Vibrio parahaemolyticus serotype O3:K6 (strain RIMD 2210633), this protein is Acetylglutamate kinase.